We begin with the raw amino-acid sequence, 156 residues long: ATP synthase subunit b 1 (156 aa).

The helical transmembrane segment at 7 to 27 threads the bilayer; the sequence is LFLQAIVFAILVWFTMKFVWP.

This sequence belongs to the ATPase B chain family. F-type ATPases have 2 components, F(1) - the catalytic core - and F(0) - the membrane proton channel. F(1) has five subunits: alpha(3), beta(3), gamma(1), delta(1), epsilon(1). F(0) has three main subunits: a(1), b(2) and c(10-14). The alpha and beta chains form an alternating ring which encloses part of the gamma chain. F(1) is attached to F(0) by a central stalk formed by the gamma and epsilon chains, while a peripheral stalk is formed by the delta and b chains.

The protein resides in the cell inner membrane. Functionally, f(1)F(0) ATP synthase produces ATP from ADP in the presence of a proton or sodium gradient. F-type ATPases consist of two structural domains, F(1) containing the extramembraneous catalytic core and F(0) containing the membrane proton channel, linked together by a central stalk and a peripheral stalk. During catalysis, ATP synthesis in the catalytic domain of F(1) is coupled via a rotary mechanism of the central stalk subunits to proton translocation. In terms of biological role, component of the F(0) channel, it forms part of the peripheral stalk, linking F(1) to F(0). This is ATP synthase subunit b 1 from Albidiferax ferrireducens (strain ATCC BAA-621 / DSM 15236 / T118) (Rhodoferax ferrireducens).